Consider the following 447-residue polypeptide: Elongation factor 1-alpha (447 aa).

Residues 5–230 (KFHINIVVIG…DQINDAKRPS (226 aa)) form the tr-type G domain. The tract at residues 14 to 21 (GHVDSGKS) is G1. 14 to 21 (GHVDSGKS) is a GTP binding site. Residue K55 is modified to N6,N6-dimethyllysine. The segment at 70-74 (GITID) is G2. K79 is subject to N6,N6,N6-trimethyllysine. Positions 91–94 (DAPG) are G3. Residues 91–95 (DAPGH) and 153–156 (NKMD) each bind GTP. The tract at residues 153-156 (NKMD) is G4. N6,N6,N6-trimethyllysine is present on K187. The tract at residues 194–196 (SGF) is G5. At K261 the chain carries N6-methyllysine. E289 carries the post-translational modification 5-glutamyl glycerylphosphorylethanolamine. K306 carries the post-translational modification N6,N6,N6-trimethyllysine. A 5-glutamyl glycerylphosphorylethanolamine modification is found at E362. Residue K396 is modified to N6,N6,N6-trimethyllysine.

The protein belongs to the TRAFAC class translation factor GTPase superfamily. Classic translation factor GTPase family. EF-Tu/EF-1A subfamily. Was detected in all tissues examined but was most abundant in roots and salt-adapted cultured cells.

It is found in the cytoplasm. This protein promotes the GTP-dependent binding of aminoacyl-tRNA to the A-site of ribosomes during protein biosynthesis. The sequence is that of Elongation factor 1-alpha from Nicotiana tabacum (Common tobacco).